The chain runs to 95 residues: Glutamyl-tRNA(Gln) amidotransferase subunit C (95 aa).

The protein belongs to the GatC family. Heterotrimer of A, B and C subunits.

The catalysed reaction is L-glutamyl-tRNA(Gln) + L-glutamine + ATP + H2O = L-glutaminyl-tRNA(Gln) + L-glutamate + ADP + phosphate + H(+). It catalyses the reaction L-aspartyl-tRNA(Asn) + L-glutamine + ATP + H2O = L-asparaginyl-tRNA(Asn) + L-glutamate + ADP + phosphate + 2 H(+). Allows the formation of correctly charged Asn-tRNA(Asn) or Gln-tRNA(Gln) through the transamidation of misacylated Asp-tRNA(Asn) or Glu-tRNA(Gln) in organisms which lack either or both of asparaginyl-tRNA or glutaminyl-tRNA synthetases. The reaction takes place in the presence of glutamine and ATP through an activated phospho-Asp-tRNA(Asn) or phospho-Glu-tRNA(Gln). The protein is Glutamyl-tRNA(Gln) amidotransferase subunit C of Rhizobium meliloti (strain 1021) (Ensifer meliloti).